The primary structure comprises 120 residues: Large ribosomal subunit protein uL18 (120 aa).

The protein belongs to the universal ribosomal protein uL18 family. As to quaternary structure, part of the 50S ribosomal subunit; part of the 5S rRNA/L5/L18/L25 subcomplex. Contacts the 5S and 23S rRNAs.

Its function is as follows. This is one of the proteins that bind and probably mediate the attachment of the 5S RNA into the large ribosomal subunit, where it forms part of the central protuberance. The protein is Large ribosomal subunit protein uL18 of Maricaulis maris (strain MCS10) (Caulobacter maris).